The primary structure comprises 328 residues: Tetraacyldisaccharide 4'-kinase (328 aa).

Position 55–62 (55–62) interacts with ATP; the sequence is TAGGNGKT.

This sequence belongs to the LpxK family.

It catalyses the reaction a lipid A disaccharide + ATP = a lipid IVA + ADP + H(+). It functions in the pathway glycolipid biosynthesis; lipid IV(A) biosynthesis; lipid IV(A) from (3R)-3-hydroxytetradecanoyl-[acyl-carrier-protein] and UDP-N-acetyl-alpha-D-glucosamine: step 6/6. Transfers the gamma-phosphate of ATP to the 4'-position of a tetraacyldisaccharide 1-phosphate intermediate (termed DS-1-P) to form tetraacyldisaccharide 1,4'-bis-phosphate (lipid IVA). This chain is Tetraacyldisaccharide 4'-kinase, found in Shigella dysenteriae serotype 1 (strain Sd197).